Reading from the N-terminus, the 340-residue chain is 4-hydroxythreonine-4-phosphate dehydrogenase (340 aa).

Substrate is bound by residues H141 and T142. H171, H216, and H271 together coordinate a divalent metal cation. Residues K279, N288, and R297 each contribute to the substrate site.

It belongs to the PdxA family. Homodimer. Requires Zn(2+) as cofactor. It depends on Mg(2+) as a cofactor. The cofactor is Co(2+).

The protein localises to the cytoplasm. The enzyme catalyses 4-(phosphooxy)-L-threonine + NAD(+) = 3-amino-2-oxopropyl phosphate + CO2 + NADH. The protein operates within cofactor biosynthesis; pyridoxine 5'-phosphate biosynthesis; pyridoxine 5'-phosphate from D-erythrose 4-phosphate: step 4/5. Its function is as follows. Catalyzes the NAD(P)-dependent oxidation of 4-(phosphooxy)-L-threonine (HTP) into 2-amino-3-oxo-4-(phosphooxy)butyric acid which spontaneously decarboxylates to form 3-amino-2-oxopropyl phosphate (AHAP). The sequence is that of 4-hydroxythreonine-4-phosphate dehydrogenase from Desulforapulum autotrophicum (strain ATCC 43914 / DSM 3382 / VKM B-1955 / HRM2) (Desulfobacterium autotrophicum).